The primary structure comprises 261 residues: MNDTLVIAGKHYRSRLLVGTGKYKDFAETRAAIDASGAEIVTVAIRRTNIGQNADEPNLLDALPPDQFTILPNTAGCYTADDAVRTLRLARELLDGHALVKLEVLGDPKSLFPNMPETLKAAETLVKDGFEVMVYCADDPIQAKMLEEIGCVAVMPLASLIGSGMGILNPWNLRLIIDNAKVPVLVDAGVGTASDAAIAMELGCDGVLMNTAIAAAGQPVLMASAMKKAVEAGREAFLAGRMPRKFYSADPSSPTAGLIGS.

The active-site Schiff-base intermediate with DXP is K101. Residues G162, 188–189 (AG), and 210–211 (NT) each bind 1-deoxy-D-xylulose 5-phosphate.

Belongs to the ThiG family. Homotetramer. Forms heterodimers with either ThiH or ThiS.

Its subcellular location is the cytoplasm. It carries out the reaction [ThiS sulfur-carrier protein]-C-terminal-Gly-aminoethanethioate + 2-iminoacetate + 1-deoxy-D-xylulose 5-phosphate = [ThiS sulfur-carrier protein]-C-terminal Gly-Gly + 2-[(2R,5Z)-2-carboxy-4-methylthiazol-5(2H)-ylidene]ethyl phosphate + 2 H2O + H(+). The protein operates within cofactor biosynthesis; thiamine diphosphate biosynthesis. Functionally, catalyzes the rearrangement of 1-deoxy-D-xylulose 5-phosphate (DXP) to produce the thiazole phosphate moiety of thiamine. Sulfur is provided by the thiocarboxylate moiety of the carrier protein ThiS. In vitro, sulfur can be provided by H(2)S. The sequence is that of Thiazole synthase from Azoarcus sp. (strain BH72).